Here is a 185-residue protein sequence, read N- to C-terminus: Urease accessory protein UreE (185 aa).

A disordered region spans residues 153-185; that stretch reads LRANSAQGHGHSHSHSHDHHGYHHHGDGHWHKH. Residues 162–175 show a composition bias toward basic residues; it reads GHSHSHSHDHHGYH. A compositionally biased stretch (basic and acidic residues) spans 176-185; it reads HHGDGHWHKH.

The protein belongs to the UreE family.

Its subcellular location is the cytoplasm. In terms of biological role, involved in urease metallocenter assembly. Binds nickel. Probably functions as a nickel donor during metallocenter assembly. The polypeptide is Urease accessory protein UreE (Haemophilus influenzae (strain 86-028NP)).